Reading from the N-terminus, the 363-residue chain is Peptide chain release factor 2 (363 aa).

N5-methylglutamine is present on Gln251.

This sequence belongs to the prokaryotic/mitochondrial release factor family. In terms of processing, methylated by PrmC. Methylation increases the termination efficiency of RF2.

It localises to the cytoplasm. Its function is as follows. Peptide chain release factor 2 directs the termination of translation in response to the peptide chain termination codons UGA and UAA. This Helicobacter pylori (strain ATCC 700392 / 26695) (Campylobacter pylori) protein is Peptide chain release factor 2 (prfB).